We begin with the raw amino-acid sequence, 430 residues long: Pre-B-cell leukemia transcription factor 2 (430 aa).

The segment at 1–52 (MDERLLGPPPPGGGRGGLGLVSGEPGGPGEPPGGGDPGGGSGGVPGGRGKQD) is disordered. A compositionally biased stretch (gly residues) spans 13 to 48 (GGRGGLGLVSGEPGGPGEPPGGGDPGGGSGGVPGGR). Residues 48 to 243 (RGKQDIGDIL…VMILRSRFLD (196 aa)) form the PBC domain. The tract at residues 55-134 (DILQQIMTIT…EGVAGPEKGG (80 aa)) is PBC-A. Ser136, Ser151, and Ser159 each carry phosphoserine. A PBC-B region spans residues 137–243 (AAAAAAAAAS…VMILRSRFLD (107 aa)). The segment at residues 244-306 (ARRKRRNFSK…NKRIRYKKNI (63 aa)) is a DNA-binding region (homeobox; TALE-type). Disordered stretches follow at residues 326-347 (QGGH…GGSF) and 378-430 (SMGP…DTSN). Ser330 bears the Phosphoserine mark. Positions 380–392 (GPGGYGDNLGGGQ) are enriched in gly residues. Ser395 is modified (phosphoserine). A compositionally biased stretch (polar residues) spans 403–418 (GSWQEAVTPSSVTSPT).

The protein belongs to the TALE/PBX homeobox family. As to quaternary structure, forms heterodimers with MEIS1 and heterotrimers with MEIS1 and HOXA9. Interacts with PBXIP1. In terms of tissue distribution, ubiquitously expressed.

The protein resides in the nucleus. In terms of biological role, transcriptional activator that binds the sequence 5'-ATCAATCAA-3'. Activates transcription of PF4 in complex with MEIS1. In Homo sapiens (Human), this protein is Pre-B-cell leukemia transcription factor 2 (PBX2).